We begin with the raw amino-acid sequence, 499 residues long: MCELYSKRDTLGLRKKHIGPSCKVFFASDPIKIVRAQRQYMFDENGEQYLDCINNVAHVGHCHPGVVKAALKQMELLNTNSRFLHDNIVEYAKRLSATLPEKLSVCYFTNSGSEANDLALRLARQFRGHQDVITLDHAYHGHLSSLIEISPYKFQKGKDVKKEFVHVAPTPDTYRGKYREDHADSASAYADEVKKIIEDAHNSGRKIAAFIAESMQSCGGQIIPPAGYFQKVAEYVHGAGGVFIADEVQVGFGRVGKHFWSFQMYGEDFVPDIVTMGKPMGNGHPVACVVTTKEIAEAFSSSGMEYFNTYGGNPVSCAVGLAVLDIIENEDLQGNAKRVGNYLTELLKKQKAKHTLIGDIRGIGLFIGIDLVKDHLKRTPATAEAQHIIYKMKEKRVLLSADGPHRNVLKIKPPMCFTEEDAKFMVDQLDRILTVLEEAMGTKTESVTSENTPCKTKMLKEAHIELLRDSTTDSKENPSRKRNGMCTDTHSLLSKRLKT.

K278 is subject to N6-(pyridoxal phosphate)lysine. The segment covering 468 to 479 (RDSTTDSKENPS) has biased composition (basic and acidic residues). The tract at residues 468 to 499 (RDSTTDSKENPSRKRNGMCTDTHSLLSKRLKT) is disordered.

The protein belongs to the class-III pyridoxal-phosphate-dependent aminotransferase family. As to quaternary structure, homotetramer. Pyridoxal 5'-phosphate is required as a cofactor.

It is found in the mitochondrion. It catalyses the reaction phosphoethanolamine + H2O = acetaldehyde + NH4(+) + phosphate. In terms of biological role, catalyzes the pyridoxal-phosphate-dependent breakdown of phosphoethanolamine, converting it to ammonia, inorganic phosphate and acetaldehyde. The sequence is that of Ethanolamine-phosphate phospho-lyase (ETNPPL) from Homo sapiens (Human).